The sequence spans 362 residues: MKNFETMAEQYKTLPCVGQLNDGLLRELKNLCRFTDFPGIRLLTERHRNECLSLIWPKNLWLRLAQPVDVAGYSEQQLAELNDHYQGFKENLCLIGAIQIGRKDVPIFVGKSSRIFCHDLEDDVLYYIAEDFDKFVRFGILGTNVITCSEPVYTRFYYDGPKFEKLETLKDLGLLQEPLNLNSSLRFNRKTALALKALRRNYISMLSELDELARCKTLAEIEHFVSINTGLKLRLETPIFTALILQDRKNIHCGTSDQKRFEEQEALFEKVVVLGFLNISAEDYGLRPILCIGETGAIYYYDWIDKVLTRIADCLLTFARIGFARYCGDFGYDKIGKVTARFGRLSTLGSAPVQQYSWYLSK.

This sequence belongs to the herpesviridae US22 family.

This is Protein U8 (U8) from Human herpesvirus 7 (strain JI) (HHV-7).